Reading from the N-terminus, the 45-residue chain is Pollen allergen Amb a 5 (45 aa).

4 cysteine pairs are disulfide-bonded: Cys4/Cys39, Cys11/Cys26, Cys18/Cys32, and Cys19/Cys43.

In terms of assembly, monomer.

This chain is Pollen allergen Amb a 5, found in Ambrosia artemisiifolia var. elatior (Short ragweed).